The primary structure comprises 100 residues: Testis development-related protein 1 (100 aa).

The interval 73-100 (GLGSLGGQDSSGSLVQRASCELESPYEL) is disordered.

Expressed in the testis but not in any other non-reproductive tissues (at protein level). Mainly located in spermatogenic cells in seminiferous tubules of adult testis.

The protein resides in the cytoplasm. The sequence is that of Testis development-related protein 1 (TDRG1) from Homo sapiens (Human).